The chain runs to 717 residues: Cleavage stimulation factor subunit 3 (717 aa).

An N-acetylserine modification is found at Ser2. HAT repeat units follow at residues 45 to 77 (QPIDKARKTYERLVAQFPSSGRFWKLYIEAEIK), 79 to 110 (KNYDKVEKLFQRCLMKVLHIDLWKCYLSYVRE), 117 to 152 (SYKEKMAQAYDFALDKIGMEIMSYQIWVDYINFLKG), 163 to 196 (QRITAVRRVYQRGCVNPMINIEQLWRDYNKYEEG), 221 to 261 (KEYE…WEKS), 271 to 303 (LITKRVMFAYEQCLLVLGHHPDIWYEAAQYLEQ), 319 to 352 (LFSDEAANIYERAISTLLKKNMLLYFAYADYEES), 354 to 387 (MKYEKVHSIYNRLLAIEDIDPTLVYIQYMKFARR), and 458 to 494 (NEDNNTRVLFERVLTSGSLPPEKSGEIWARFLAFESN). The segment at 684–705 (VKRPNEDSDEDEEKGAVVPPVH) is disordered. Ser691 carries the phosphoserine modification.

In terms of assembly, homodimer. The CSTF complex is composed of CSTF1 (50 kDa subunit), CSTF2 (64 kDa subunit) and CSTF3 (77 kDa subunit). CSTF3 directly interacts with CSTF1 and CSTF2. Interacts with FIP1L1.

The protein resides in the nucleus. Functionally, one of the multiple factors required for polyadenylation and 3'-end cleavage of mammalian pre-mRNAs. This chain is Cleavage stimulation factor subunit 3 (CSTF3), found in Homo sapiens (Human).